Reading from the N-terminus, the 364-residue chain is tRNA 2-selenouridine synthase (364 aa).

One can recognise a Rhodanese domain in the interval 14–137; the sequence is LIADTPIIDV…LRQTAIQATI (124 aa). The active-site S-selanylcysteine intermediate is cysteine 97.

Belongs to the SelU family. Monomer.

It catalyses the reaction 5-methylaminomethyl-2-thiouridine(34) in tRNA + selenophosphate + (2E)-geranyl diphosphate + H2O + H(+) = 5-methylaminomethyl-2-selenouridine(34) in tRNA + (2E)-thiogeraniol + phosphate + diphosphate. The enzyme catalyses 5-methylaminomethyl-2-thiouridine(34) in tRNA + (2E)-geranyl diphosphate = 5-methylaminomethyl-S-(2E)-geranyl-thiouridine(34) in tRNA + diphosphate. It carries out the reaction 5-methylaminomethyl-S-(2E)-geranyl-thiouridine(34) in tRNA + selenophosphate + H(+) = 5-methylaminomethyl-2-(Se-phospho)selenouridine(34) in tRNA + (2E)-thiogeraniol. The catalysed reaction is 5-methylaminomethyl-2-(Se-phospho)selenouridine(34) in tRNA + H2O = 5-methylaminomethyl-2-selenouridine(34) in tRNA + phosphate. Involved in the post-transcriptional modification of the uridine at the wobble position (U34) of tRNA(Lys), tRNA(Glu) and tRNA(Gln). Catalyzes the conversion of 2-thiouridine (S2U-RNA) to 2-selenouridine (Se2U-RNA). Acts in a two-step process involving geranylation of 2-thiouridine (S2U) to S-geranyl-2-thiouridine (geS2U) and subsequent selenation of the latter derivative to 2-selenouridine (Se2U) in the tRNA chain. This chain is tRNA 2-selenouridine synthase, found in Escherichia coli O81 (strain ED1a).